The primary structure comprises 508 residues: Protein adenylyltransferase Fic (508 aa).

Residues 48-70 (FYRFALFFIAGSFAAFSFHALTS) form a helical membrane-spanning segment. TPR repeat units follow at residues 132 to 165 (ALGALRLAQDMHLSGKDDKASRLFEHALALAPKH) and 166 to 200 (PEVLLRYGEFLEHNQRNIVLADQYYFQALTLCPSN). The Inhibitory (S/T)XXXE(G/N) motif motif lies at 257–262 (SVGIEG). Residues glutamate 261 and 342-345 (VGGH) contribute to the ATP site. The Fido domain maps to 311 to 446 (ITIKDILELH…IRPFVRFIAD (136 aa)). Residue histidine 389 is part of the active site. ATP-binding positions include 393-400 (DGNGRTSR), 425-426 (YY), and asparagine 433.

It belongs to the fic family. In terms of assembly, homodimer.

It is found in the membrane. The catalysed reaction is L-tyrosyl-[protein] + ATP = O-(5'-adenylyl)-L-tyrosyl-[protein] + diphosphate. The enzyme catalyses L-threonyl-[protein] + ATP = 3-O-(5'-adenylyl)-L-threonyl-[protein] + diphosphate. It carries out the reaction 3-O-(5'-adenylyl)-L-threonyl-[protein] + H2O = L-threonyl-[protein] + AMP + H(+). Its activity is regulated as follows. The side chain of Glu-261 determines which of the two opposing activities (AMPylase or de-AMPylase) will take place. In response to endoplasmic reticulum stress, mediates de-AMPylase activity. Adenylyltransferase activity is inhibited by the inhibitory helix present at the N-terminus: Glu-261 binds ATP and competes with ATP-binding at Arg-400, thereby preventing adenylyltransferase activity. In unstressed cells, disengagement of Glu-261 promotes adenylyltransferase activity. Activation dissociates ATP-binding from Glu-261, allowing ordered binding of the entire ATP moiety with the alpha-phosphate in an orientation that is productive for accepting an incoming target hydroxyl side chain. Functionally, protein that can both mediate the addition of adenosine 5'-monophosphate (AMP) to specific residues of target proteins (AMPylation), and the removal of the same modification from target proteins (de-AMPylation), depending on the context. The side chain of Glu-261 determines which of the two opposing activities (AMPylase or de-AMPylase) will take place. Acts as a key regulator of the unfolded protein response (UPR) by mediating AMPylation or de-AMPylation of Hsc70-3/BiP. In unstressed cells, acts as an adenylyltransferase by mediating AMPylation of Hsc70-3/BiP at 'Thr-518', thereby inactivating it. In response to endoplasmic reticulum stress, acts as a phosphodiesterase by mediating removal of ATP (de-AMPylation) from Hsc70-3/BiP at 'Thr-518', leading to restore HSPA5/BiP activity. This Drosophila persimilis (Fruit fly) protein is Protein adenylyltransferase Fic.